Reading from the N-terminus, the 499-residue chain is Glycerol kinase (499 aa).

Position 12 (T12) interacts with ADP. ATP-binding residues include T12, T13, and S14. T12 is a binding site for sn-glycerol 3-phosphate. R16 serves as a coordination point for ADP. Sn-glycerol 3-phosphate contacts are provided by R82, E83, Y134, and D240. Glycerol-binding residues include R82, E83, Y134, D240, and Q241. Positions 262 and 306 each coordinate ADP. ATP is bound by residues T262, G306, Q310, and G412. The ADP site is built by G412 and N416.

This sequence belongs to the FGGY kinase family.

The enzyme catalyses glycerol + ATP = sn-glycerol 3-phosphate + ADP + H(+). Its pathway is polyol metabolism; glycerol degradation via glycerol kinase pathway; sn-glycerol 3-phosphate from glycerol: step 1/1. Inhibited by fructose 1,6-bisphosphate (FBP). Functionally, key enzyme in the regulation of glycerol uptake and metabolism. Catalyzes the phosphorylation of glycerol to yield sn-glycerol 3-phosphate. The polypeptide is Glycerol kinase (Nocardia farcinica (strain IFM 10152)).